Consider the following 121-residue polypeptide: Estrogen receptor (121 aa).

The 121-residue stretch at 1 to 121 (LFAPNLLLDR…IRHMSNKGME (121 aa)) folds into the NR LBD domain. The S-palmitoyl cysteine moiety is linked to residue Cys-45.

The protein belongs to the nuclear hormone receptor family. NR3 subfamily. In terms of assembly, binds DNA as a homodimer. Can form a heterodimer with ESR2. Interacts with coactivator NCOA5. Interacts with NCOA7; the interaction is ligand-inducible. Interacts with AKAP13, CUEDC2, HEXIM1, KDM5A, MAP1S, PELP1, SMARD1, and UBE1C. Interacts with MUC1; the interaction is stimulated by 7 beta-estradiol (E2) and enhances ERS1-mediated transcription. Interacts with DNTTIP2, and UIMC1. Interacts with KMT2D/MLL2. Interacts with ATAD2; the interaction is enhanced by estradiol. Interacts with KIF18A and LDB1. Interacts with RLIM (via its C-terminus). Interacts with MACROD1. Interacts with SH2D4A and PLCG. Interacts with SH2D4A; the interaction blocks binding to PLCG and inhibits estrogen-induced cell proliferation. Interacts with DYNLL1. Interacts with CCDC62; the interaction requires estradiol and appears to enhance the transcription of target genes. Interacts with NR2C1; the interaction prevents homodimerization of ESR1 and suppresses its transcriptional activity and cell growth. Interacts with DNAAF4. Interacts with PRMT2. Interacts with PI3KR1 or PIK3R2, SRC and PTK2/FAK1. Interacts with RBFOX2. Interacts with EP300; the interaction is estrogen-dependent and enhanced by CITED1. Interacts with CITED1; the interaction is estrogen-dependent. Interacts with FAM120B, FOXL2, PHB2 and SLC30A9. Interacts with coactivators NCOA3 and NCOA6. Interacts with STK3/MST2 only in the presence of SAV1 and vice-versa. Binds to CSNK1D. Interacts with NCOA2; NCOA2 can interact with ESR1 AF-1 and AF-2 domains simultaneously and mediate their transcriptional synergy. Interacts with DDX5. Interacts with NCOA1; the interaction seems to require a self-association of N-terminal and C-terminal regions. Interacts with ZNF366, DDX17, NFKB1, RELA, SP1 and SP3. Interacts with NRIP1. Interacts with GPER1; the interaction occurs in an estrogen-dependent manner. Interacts with CLOCK and the interaction is stimulated by estrogen. Interacts with TRIP4 (ufmylated); estrogen dependent. Interacts with LMTK3; the interaction phosphorylates ESR1 (in vitro) and protects it against proteasomal degradation. Interacts with CCAR2 (via N-terminus) in a ligand-independent manner. Interacts with ZFHX3. Interacts with SFR1 in a ligand-dependent and -independent manner. Interacts with DCAF13, LATS1 and DCAF1; regulates ESR1 ubiquitination and ubiquitin-mediated proteasomal degradation. Interacts (via DNA-binding domain) with POU4F2 (C-terminus); this interaction increases the estrogen receptor ESR1 transcriptional activity in a DNA- and ligand 17-beta-estradiol-independent manner. Interacts with ESRRB isoform 1. Interacts with UBE3A and WBP2. Interacts with GTF2B. Interacts with RBM39. In the absence of hormonal ligand, interacts with TACC1. Interacts with BAG1; the interaction is promoted in the absence of estradiol (17-beta-estradiol/E2). Interacts with and ubiquitinated by STUB1; the interaction is promoted in the absence of estradiol (17-beta-estradiol/E2). Interacts with NEDD8. Ubiquitinated; regulated by LATS1 via DCAF1 it leads to ESR1 proteasomal degradation. Deubiquitinated by OTUB1. Ubiquitinated by STUB1/CHIP; in the CA1 hippocampal region following loss of endogenous circulating estradiol (17-beta-estradiol/E2). Ubiquitinated by UBR5, leading to its degradation: UBR5 specifically recognizes and binds ligand-bound ESR1 when it is not associated with coactivators (NCOAs). In presence of NCOAs, the UBR5-degron is not accessible, preventing its ubiquitination and degradation. In terms of processing, palmitoylated at Cys-45 by ZDHHC7 and ZDHHC21. Palmitoylation is required for plasma membrane targeting and for rapid intracellular signaling via ERK and AKT kinases and cAMP generation, but not for signaling mediated by the nuclear hormone receptor. Post-translationally, phosphorylated by cyclin A/CDK2 and CK1. Phosphorylation probably enhances transcriptional activity. Dephosphorylation by PPP5C inhibits its transactivation activity. Phosphorylated by LMTK3 (in vitro). Dimethylated by PRMT1. Demethylated by JMJD6.

Its subcellular location is the nucleus. The protein localises to the cytoplasm. The protein resides in the golgi apparatus. It localises to the cell membrane. In terms of biological role, nuclear hormone receptor. The steroid hormones and their receptors are involved in the regulation of eukaryotic gene expression and affect cellular proliferation and differentiation in target tissues. Ligand-dependent nuclear transactivation involves either direct homodimer binding to a palindromic estrogen response element (ERE) sequence or association with other DNA-binding transcription factors, such as AP-1/c-Jun, c-Fos, ATF-2, Sp1 and Sp3, to mediate ERE-independent signaling. Ligand binding induces a conformational change allowing subsequent or combinatorial association with multiprotein coactivator complexes through LXXLL motifs of their respective components. Mutual transrepression occurs between the estrogen receptor (ER) and NF-kappa-B in a cell-type specific manner. Decreases NF-kappa-B DNA-binding activity and inhibits NF-kappa-B-mediated transcription from the IL6 promoter and displace RELA/p65 and associated coregulators from the promoter. Recruited to the NF-kappa-B response element of the CCL2 and IL8 promoters and can displace CREBBP. Present with NF-kappa-B components RELA/p65 and NFKB1/p50 on ERE sequences. Can also act synergistically with NF-kappa-B to activate transcription involving respective recruitment adjacent response elements; the function involves CREBBP. Can activate the transcriptional activity of TFF1. Also mediates membrane-initiated estrogen signaling involving various kinase cascades. Essential for MTA1-mediated transcriptional regulation of BRCA1 and BCAS3. Maintains neuronal survival in response to ischemic reperfusion injury when in the presence of circulating estradiol (17-beta-estradiol/E2). This chain is Estrogen receptor (ESR1), found in Macaca mulatta (Rhesus macaque).